Consider the following 634-residue polypeptide: AAl-toxin cluster-specific transcription factor ALT13 (634 aa).

Residues C30–C56 constitute a DNA-binding region (zn(2)-C6 fungal-type). A disordered region spans residues R66–A89. Residues V69 to G81 show a composition bias toward polar residues.

Its subcellular location is the nucleus. Transcription factor that regulates the expression of the gene cluster that mediates the biosynthesis of AAL-toxins, sphinganine-analog mycotoxins responsible for Alternaria stem canker on tomato by the tomato pathotype. The polypeptide is AAl-toxin cluster-specific transcription factor ALT13 (Alternaria alternata (Alternaria rot fungus)).